The chain runs to 1818 residues: Nestin (1818 aa).

The segment at 1 to 14 (WREKLEAEVQRQNL) is coil 1B. The IF rod domain occupies 1-135 (WREKLEAEVQ…TLLEAENSRL (135 aa)). The tract at residues 15-17 (YQE) is linker 2. Residues 18 to 135 (RVAHMESSLG…TLLEAENSRL (118 aa)) form a coil 2B region. Ser-133 is subject to Phosphoserine. Residues 136-1818 (QTPGRSSQAS…DRDSWSSGED (1683 aa)) are tail. Residues Thr-137 and Thr-160 each carry the phosphothreonine modification. Ser-180 is modified (phosphoserine). Phosphothreonine is present on Thr-210. Disordered regions lie at residues 266–309 (EEAG…GSSI), 336–355 (AQETQEDGLHTEEIQDSQGP), 377–451 (HETP…SPEG), and 480–787 (AFKK…EEDQ). Ser-288 is subject to Phosphoserine. A compositionally biased stretch (basic and acidic residues) spans 292–303 (PVLEAKDGDSTE). The span at 382 to 398 (KENCNSLRSVDENQGTL) shows a compositional bias: polar residues. A phosphoserine mark is found at Ser-390 and Ser-400. Composition is skewed to basic and acidic residues over residues 400 to 427 (SPEEEKQTLLKSLEEKDVEVEKTLEKGV) and 434 to 443 (LGKEDPRIED). Ser-448 carries the phosphoserine modification. The span at 495–508 (EIQRVERLIEKEGQ) shows a compositional bias: basic and acidic residues. The residue at position 513 (Ser-513) is a Phosphoserine. 2 stretches are compositionally biased toward basic and acidic residues: residues 521 to 536 (TDRPLEKENGEPLKPV) and 565 to 586 (TDRPLEKEEDQLVERLVEKEGQ). Ser-591 is modified (phosphoserine). 3 stretches are compositionally biased toward basic and acidic residues: residues 599–614 (TDRPLEKENGEPLKPV), 643–664 (TDRPLEKEEDQLVERLVEKEGQ), and 711–732 (TDRPLEKEEDQRVERLIEKEGQ). At Ser-737 the chain carries Phosphoserine. The span at 744–773 (ETYRLLEKENGEPLKPVEEEDQRVERLIEK) shows a compositional bias: basic and acidic residues. Ser-803 and Ser-824 each carry phosphoserine. The segment at 866 to 900 (ESLLKKGTQESLESHEDRNQETQDPQRFLEEEGQG) is disordered. A compositionally biased stretch (basic and acidic residues) spans 868–886 (LLKKGTQESLESHEDRNQE). 2 positions are modified to phosphoserine: Ser-915 and Ser-957. Residues 945-998 (SLLERESQDSGKSLEGQEAFRCLGKEDPESLQFPEVQDQEIQRSLQQETQQTLG) form a disordered region. Positions 986–997 (QRSLQQETQQTL) are enriched in polar residues. Residue Lys-1043 forms a Glycyl lysine isopeptide (Lys-Gly) (interchain with G-Cter in SUMO1); alternate linkage. A Glycyl lysine isopeptide (Lys-Gly) (interchain with G-Cter in SUMO2); alternate cross-link involves residue Lys-1043. Residues Ser-1052, Ser-1063, Ser-1073, Ser-1123, Ser-1134, Ser-1162, and Ser-1238 each carry the phosphoserine modification. Disordered stretches follow at residues 1134–1262 (SPEA…LEGQ) and 1334–1818 (HPSL…SGED). Composition is skewed to basic and acidic residues over residues 1342–1361 (VEAKIAHDLEGPGKEPKEAG) and 1401–1416 (ASDHEGSDAPEPRPSE). A compositionally biased stretch (acidic residues) spans 1490-1505 (QDWEESREESEADELG). Ser-1495, Ser-1499, and Ser-1523 each carry phosphoserine. A compositionally biased stretch (acidic residues) spans 1570 to 1579 (LSSEEFEDLG). A phosphoserine mark is found at Ser-1614 and Ser-1623. The segment covering 1616 to 1636 (GFADEEESGEEGEEEEHEDGT) has biased composition (acidic residues). Positions 1686-1697 (GLETESQDSAEP) are enriched in polar residues. Residues Ser-1698, Ser-1700, Ser-1791, Ser-1814, and Ser-1815 each carry the phosphoserine modification. Residues 1698–1708 (SGSEVSESVSS) show a composition bias toward low complexity.

Belongs to the intermediate filament family. As to quaternary structure, interacts with FHOD3. Forms homodimers and homotetramers in vitro. In mixtures with other intermediate filament proteins such as vimentin and alpha-internexin, preferentially forms heterodimers which can assemble to form intermediate filaments if nestin does not exceed 25%. Post-translationally, constitutively phosphorylated. This increases during mitosis when the cytoplasmic intermediate filament network is reorganized.

In terms of biological role, required for brain and eye development. Promotes the disassembly of phosphorylated vimentin intermediate filaments (IF) during mitosis and may play a role in the trafficking and distribution of IF proteins and other cellular factors to daughter cells during progenitor cell division. Required for survival, renewal and mitogen-stimulated proliferation of neural progenitor cells. The protein is Nestin of Mesocricetus auratus (Golden hamster).